The following is a 495-amino-acid chain: Alkaline protease 2 (495 aa).

A signal peptide spans 1–16 (MKGYLSLSILPLLVAA). Residues 17–136 (SPVVVDSIHN…IEKDSEVHTM (120 aa)) constitute a propeptide that is removed on maturation. Residues 43-136 (SYIVVFKKHV…IEKDSEVHTM (94 aa)) form the Inhibitor I9 domain. The 307-residue stretch at 146–452 (PWGLARISHR…GGSSNYTDII (307 aa)) folds into the Peptidase S8 domain. Catalysis depends on charge relay system residues Asp-182 and His-214. N-linked (GlcNAc...) asparagine glycosylation occurs at Asn-284. Ser-380 (charge relay system) is an active-site residue. N-linked (GlcNAc...) asparagine glycans are attached at residues Asn-447 and Asn-460.

Belongs to the peptidase S8 family.

The enzyme catalyses Hydrolysis of proteins with broad specificity, and of Bz-Arg-OEt &gt; Ac-Tyr-OEt. Does not hydrolyze peptide amides.. Its function is as follows. Alkaline protease that allows assimilation of proteinaceous substrates. Acts as a significant virulence factor in invasive aspergillosis. Required for regular sporulation. The sequence is that of Alkaline protease 2 (alp2) from Aspergillus fumigatus (strain CBS 144.89 / FGSC A1163 / CEA10) (Neosartorya fumigata).